The following is a 259-amino-acid chain: Undecaprenyl-diphosphatase 3 (259 aa).

A run of 8 helical transmembrane segments spans residues 1-21, 39-59, 71-91, 99-119, 133-153, 174-194, 208-228, and 239-259; these read MNWL…FLPI, AGLF…FIYY, FSKL…IGLL, ISKT…FLYM, ITYK…FPAI, AYFS…LQFV, SLIV…SWMI, and FAYY…TDVF.

It belongs to the UppP family.

It is found in the cell membrane. It catalyses the reaction di-trans,octa-cis-undecaprenyl diphosphate + H2O = di-trans,octa-cis-undecaprenyl phosphate + phosphate + H(+). Its function is as follows. Catalyzes the dephosphorylation of undecaprenyl diphosphate (UPP). Confers resistance to bacitracin. This chain is Undecaprenyl-diphosphatase 3, found in Bacillus cereus (strain ATCC 14579 / DSM 31 / CCUG 7414 / JCM 2152 / NBRC 15305 / NCIMB 9373 / NCTC 2599 / NRRL B-3711).